We begin with the raw amino-acid sequence, 277 residues long: Inositol monophosphatase 1 (277 aa).

Mg(2+) contacts are provided by E70, D90, I92, and D93. Substrate is bound at residue E70. I92–T95 is a substrate binding site. T168 bears the Phosphothreonine mark. Residues G194–A196, E213, and D220 contribute to the substrate site. D220 provides a ligand contact to Mg(2+).

Belongs to the inositol monophosphatase superfamily. Homodimer. Requires Mg(2+) as cofactor.

It localises to the cytoplasm. It carries out the reaction a myo-inositol phosphate + H2O = myo-inositol + phosphate. The enzyme catalyses 1D-myo-inositol 1-phosphate + H2O = myo-inositol + phosphate. It catalyses the reaction 1D-myo-inositol 2-phosphate + H2O = myo-inositol + phosphate. The catalysed reaction is 1D-myo-inositol 3-phosphate + H2O = myo-inositol + phosphate. It carries out the reaction 1D-myo-inositol 4-phosphate + H2O = myo-inositol + phosphate. The enzyme catalyses 1D-myo-inositol 5-phosphate + H2O = myo-inositol + phosphate. It catalyses the reaction 1D-myo-inositol 6-phosphate + H2O = myo-inositol + phosphate. The catalysed reaction is scyllo-inositol 1-phosphate + H2O = scyllo-inositol + phosphate. It carries out the reaction alpha-D-galactose 1-phosphate + H2O = D-galactose + phosphate. The enzyme catalyses alpha-D-glucose 1-phosphate + H2O = D-glucose + phosphate. It catalyses the reaction D-glucose 6-phosphate + H2O = D-glucose + phosphate. The catalysed reaction is beta-D-fructose 1-phosphate + H2O = D-fructose + phosphate. It carries out the reaction glycerol 2-phosphate + H2O = glycerol + phosphate. The enzyme catalyses adenosine 2'-phosphate + H2O = adenosine + phosphate. It participates in polyol metabolism; myo-inositol biosynthesis; myo-inositol from D-glucose 6-phosphate: step 2/2. Its activity is regulated as follows. Inhibited by Li(+), Ca(2+) and Mn(2+), but also by Mg(2+) at concentrations above 3 mM. Functionally, phosphatase involved in the dephosphorylation of myo-inositol monophosphate to generate myo-inositol. Is also able to dephosphorylate scyllo-inositol-phosphate, myo-inositol 1,4-diphosphate, scyllo-inositol-1,3-diphosphate and scyllo-inositol-1,4-diphosphate. Also dephosphorylates in vitro other sugar-phosphates including D-galactose-1-phosphate, glucose-1-phosphate, glucose-6-phosphate, fructose-1-phosphate, beta-glycerophosphate and 2'-AMP. Responsible for the provision of inositol required for synthesis of phosphatidylinositol and polyphosphoinositides, and involved in maintaining normal brain function. Has been implicated as the pharmacological target for lithium Li(+) action in brain. This Sus scrofa (Pig) protein is Inositol monophosphatase 1 (IMPA1).